We begin with the raw amino-acid sequence, 561 residues long: Acyl-CoA ligase ppsA (561 aa).

Asparagine 21 carries N-linked (GlcNAc...) asparagine glycosylation. The helical transmembrane segment at 71–91 (SILYPALFLAIVGVGAVYMGA) threads the bilayer. 203 to 214 (MFATSGTSGLPK) serves as a coordination point for AMP. Asparagine 396 carries an N-linked (GlcNAc...) asparagine glycan. An AMP-binding region spans residues 462–540 (ELEAELAQHP…DSIPRNSGGK (79 aa)).

It belongs to the ATP-dependent AMP-binding enzyme family.

The protein localises to the membrane. The catalysed reaction is acetate + ATP + CoA = acetyl-CoA + ADP + phosphate. The enzyme catalyses propanoate + ATP + CoA = propanoyl-CoA + AMP + diphosphate. The protein operates within secondary metabolite biosynthesis. Acyl-CoA ligase; part of the gene cluster that mediates the biosynthesis of 2,4'-dihydroxy-3'-methoxypropiophenone. The first step of the pathway is the conversion of acetate into acetyl-CoA by the acyl-CoA ligase ppsA. Acetyl-CoA is then used as a starter unit by the polyketide synthase ppsB and condensed with 4 malonyl-CoA unit to produce the pentaketide backbone. During polyketide extension, the polykedite chain is probably reduced and dehydrated by the KR and PT domains, respectively. O-methylation seems to be catalyzed by an unknown methyltransferase rather than by the CMeT domain of ppsB. Two hydroxylations and one further decarboxylation step catalyzed by yet unknown enzymes are then required to yield 4'-hydroxy-3'-methoxypropiophenone. PpsC functions as a carrier protein to transport 4'-hydroxy-3'-methoxypropiophenone to a specific cell compartment in which 4'-hydroxy-3'-methoxypropiophenone is hydroxylated to 2,4'-dihydroxy-3'-methoxypropiophenone by a still to be identified enzyme. This Aspergillus oryzae (strain ATCC 42149 / RIB 40) (Yellow koji mold) protein is Acyl-CoA ligase ppsA.